Reading from the N-terminus, the 250-residue chain is MNIDMNRFISILQFLTRIPIKRDVPMEEAFHKGIIYFPVVGGIIGALLMVAYRGASLYLAHSLSALLTVGFFVFLTGGLHLDGLGDTFDGLYSNRNKETILEIMKDSRLGTNGVLAMVFILLLKLYGIQGLGEHQIYWGIILMPVMGRQAIVYGCYRTIYGRSQGLGHLFIGKVSKKELLISSLLTFILAAMHLPSLIFALLLPIGSQLYKGHVMKKIDGMTGDTLGSLCELTEGCYLLFILLITGAGLF.

The next 6 helical transmembrane spans lie at 32–52, 59–79, 113–133, 136–156, 185–205, and 230–250; these read KGIIYFPVVGGIIGALLMVAY, LAHSLSALLTVGFFVFLTGGL, GVLAMVFILLLKLYGIQGLGE, IYWGIILMPVMGRQAIVYGCY, LTFILAAMHLPSLIFALLLPI, and CELTEGCYLLFILLITGAGLF.

The protein belongs to the CobS family. Requires Mg(2+) as cofactor.

The protein resides in the cell membrane. It catalyses the reaction alpha-ribazole + adenosylcob(III)inamide-GDP = adenosylcob(III)alamin + GMP + H(+). The enzyme catalyses alpha-ribazole 5'-phosphate + adenosylcob(III)inamide-GDP = adenosylcob(III)alamin 5'-phosphate + GMP + H(+). The protein operates within cofactor biosynthesis; adenosylcobalamin biosynthesis; adenosylcobalamin from cob(II)yrinate a,c-diamide: step 7/7. Its function is as follows. Joins adenosylcobinamide-GDP and alpha-ribazole to generate adenosylcobalamin (Ado-cobalamin). Also synthesizes adenosylcobalamin 5'-phosphate from adenosylcobinamide-GDP and alpha-ribazole 5'-phosphate. The sequence is that of Adenosylcobinamide-GDP ribazoletransferase from Alkaliphilus metalliredigens (strain QYMF).